We begin with the raw amino-acid sequence, 241 residues long: Hydantoin racemase (241 aa).

Belongs to the HyuE racemase family. In terms of assembly, homotetramer.

It catalyses the reaction a D-5-monosubstituted hydantoin = a L-5-monosubstituted hydantoin. The catalysed reaction is D-5-benzylhydantoin = L-5-benzylhydantoin. The enzyme catalyses D-5-isobutylhydantoin = L-5-isobutylhydantoin. Inhibited by Cu(2+), Hg(2+), Pb(2+) and Zn(2+). The activity is twofold lower in the presence of Mn(2+), Co(2+) and Ni(2+). The insignificant effect of the metal chelating agent EDTA on the hydantoin racemase activity would indicate that it is not a metalloenzyme. In terms of biological role, may be involved in the asymmetric conversion of racemic 5-substituted hydantoins to the corresponding L-amino acids. Catalyzes the racemization via enolization of D- and L-5-monosubstituted hydantoins. In Rhizobium meliloti (Ensifer meliloti), this protein is Hydantoin racemase.